A 319-amino-acid chain; its full sequence is Probable alcohol dehydrogenase (319 aa).

C18, H39, C68, C71, C74, C82, and C149 together coordinate Zn(2+).

The protein belongs to the zinc-containing alcohol dehydrogenase family. It depends on Zn(2+) as a cofactor.

It catalyses the reaction a primary alcohol + NAD(+) = an aldehyde + NADH + H(+). It carries out the reaction a secondary alcohol + NAD(+) = a ketone + NADH + H(+). This is Probable alcohol dehydrogenase (terPD) from Pseudomonas sp.